A 600-amino-acid polypeptide reads, in one-letter code: MLPRVARLNTHLVSLALLGFQITYGAITYQHPDDLPSDVDYDFIVAGGGTAGLVVASRLSENPDWNILVIEAGPSNKDAPETRVPGLAGSLPASRTDWNYTTIPQDALGGRSLNYSRAKVLGGCSSHNSMVYTRGSKDDWNHWADITGDQGLSWDSILPVMKKAEKFSKDFSNQSVDGHIDPSMHGHDGLLSVVSSYTNVSFNDLLLETTKELSDEFPFKLDLNDGNPHGLAWTQYTIDHRAERSSSATSYLESTRDNVHVLVNSRVTRIFSAGNGTDFRSVEFAVDANSPKKVLTAKKEVILSAGVIASPQVLMNSGIGGREELQAIGVDTLIDNPSVGKNLSDQAATLLMFDTTLPNTDYDVAAALTEWEDSRSGPMAYGARLNHLTWVRLLDDKLNGSDPSSGKNSPHIEFQFMQISHQLPPADAPNQVKLPDPDSIGAVLLLAVVNLYSVSHGSIILNDNDPFANPMIDLNMFGDQKDIAILREGVRSARRMFSSQAFKDVVNGTVYPPADVTSDEDLDAFLRTSAISYWHGVGTLSMSPQNASWGVVDPDFRVKGTSGLRVVDASVIPYAPAGHTQVPVYTFAEHASVLIAKSYA.

The first 25 residues, 1-25 (MLPRVARLNTHLVSLALLGFQITYG), serve as a signal peptide directing secretion. N-linked (GlcNAc...) asparagine glycans are attached at residues asparagine 99 and asparagine 114. A Tele-8alpha-FAD histidine modification is found at histidine 127. Residues asparagine 173, asparagine 199, asparagine 275, asparagine 342, asparagine 399, and asparagine 507 are each glycosylated (N-linked (GlcNAc...) asparagine). Histidine 535 (proton acceptor) is an active-site residue. Asparagine 546 is a glycosylation site (N-linked (GlcNAc...) asparagine). Histidine 579 is an active-site residue.

Belongs to the GMC oxidoreductase family. As to quaternary structure, monomer. FAD is required as a cofactor. Post-translationally, N-glycosylated.

It is found in the secreted. The catalysed reaction is pyranose + acceptor = pyranos-2-ulose + reduced acceptor.. It catalyses the reaction pyranose + acceptor = pyranos-3-ulose + reduced acceptor.. The enzyme catalyses pyranose + acceptor = pyranos-2,3-diulose + reduced acceptor.. It carries out the reaction a pyranoside + acceptor = a pyranosid-3-ulose + reduced acceptor.. The catalysed reaction is a pyranoside + acceptor = a pyranosid-3,4-diulose + reduced acceptor.. Functionally, catalyzes the single-oxidation or sequential double oxidation reaction of carbohydrates primarily at carbon-2 and/or carbon-3 with the concomitant reduction of the flavin. The enzyme exhibits a broad sugar substrate specificity, oxidizing different aldopyranoses to the corresponding C-1, C-2, C-3 or C-1,2, C-2,3 and C-3,4 (di)dehydro sugars with substrate-specific regioselectivity. Accepts only a narrow range of electron acceptors such as substituted benzoquinones and complexed metal ions and reacts extremely slowly with O(2) as acceptor. May play a role in the natural recycling of plant matter by oxidizing all major monosaccharides in lignocellulose and by reducing quinone compounds or reactive radical species generated during lignin depolymerization. In Leucoagaricus meleagris (Western flat-topped agaric), this protein is Pyranose dehydrogenase 3.